A 388-amino-acid chain; its full sequence is Succinyl-diaminopimelate desuccinylase (388 aa).

His71 provides a ligand contact to Zn(2+). Residue Asp73 is part of the active site. Asp104 provides a ligand contact to Zn(2+). The active-site Proton acceptor is the Glu143. The Zn(2+) site is built by Glu144, Glu172, and His361.

It belongs to the peptidase M20A family. DapE subfamily. In terms of assembly, homodimer. Zn(2+) serves as cofactor. It depends on Co(2+) as a cofactor.

The catalysed reaction is N-succinyl-(2S,6S)-2,6-diaminopimelate + H2O = (2S,6S)-2,6-diaminopimelate + succinate. It participates in amino-acid biosynthesis; L-lysine biosynthesis via DAP pathway; LL-2,6-diaminopimelate from (S)-tetrahydrodipicolinate (succinylase route): step 3/3. Catalyzes the hydrolysis of N-succinyl-L,L-diaminopimelic acid (SDAP), forming succinate and LL-2,6-diaminopimelate (DAP), an intermediate involved in the bacterial biosynthesis of lysine and meso-diaminopimelic acid, an essential component of bacterial cell walls. This chain is Succinyl-diaminopimelate desuccinylase, found in Bradyrhizobium diazoefficiens (strain JCM 10833 / BCRC 13528 / IAM 13628 / NBRC 14792 / USDA 110).